The chain runs to 785 residues: E3 UFM1-protein ligase 1 homolog (785 aa).

The interval 404–483 (GGNASNQLDD…GGGGSNKKSV (80 aa)) is disordered.

The protein belongs to the UFL1 family.

Functionally, E3 UFM1-protein ligase that mediates ufmylation of target proteins. The sequence is that of E3 UFM1-protein ligase 1 homolog from Drosophila willistoni (Fruit fly).